Consider the following 447-residue polypeptide: Tubulin beta-2 chain (447 aa).

GTP is bound by residues Q11, E69, S138, G142, T143, G144, N204, and N226. Position 69 (E69) interacts with Mg(2+). Polar residues predominate over residues 419–428; that stretch reads VSEYQQYQDA. The disordered stretch occupies residues 419-447; the sequence is VSEYQQYQDATSDEEGEYEDEDQEPEEDM. A compositionally biased stretch (acidic residues) spans 429 to 447; it reads TSDEEGEYEDEDQEPEEDM.

The protein belongs to the tubulin family. In terms of assembly, dimer of alpha and beta chains. A typical microtubule is a hollow water-filled tube with an outer diameter of 25 nm and an inner diameter of 15 nM. Alpha-beta heterodimers associate head-to-tail to form protofilaments running lengthwise along the microtubule wall with the beta-tubulin subunit facing the microtubule plus end conferring a structural polarity. Microtubules usually have 13 protofilaments but different protofilament numbers can be found in some organisms and specialized cells. Mg(2+) is required as a cofactor.

It is found in the cytoplasm. The protein resides in the cytoskeleton. Tubulin is the major constituent of microtubules, a cylinder consisting of laterally associated linear protofilaments composed of alpha- and beta-tubulin heterodimers. Microtubules grow by the addition of GTP-tubulin dimers to the microtubule end, where a stabilizing cap forms. Below the cap, tubulin dimers are in GDP-bound state, owing to GTPase activity of alpha-tubulin. This Triticum aestivum (Wheat) protein is Tubulin beta-2 chain (TUBB2).